The primary structure comprises 303 residues: Albumin b-32 (303 aa).

The segment covering 112–137 has biased composition (low complexity); that stretch reads ATPTSSATTPGGSASAAGTRTSSATR. The interval 112–175 is disordered; the sequence is ATPTSSATTP…GGGGADADAD (64 aa). The segment covering 146–156 has biased composition (basic and acidic residues); sequence ARDDQGRQRPG.

This sequence belongs to the ribosome-inactivating protein family. Type 1 RIP subfamily. As to quaternary structure, monomer. Endosperm.

It is found in the cytoplasm. The enzyme catalyses Endohydrolysis of the N-glycosidic bond at one specific adenosine on the 28S rRNA.. A possible regulatory factor for the synthesis of zeins, the major group of storage proteins. The polypeptide is Albumin b-32 (O6) (Zea mays (Maize)).